The chain runs to 177 residues: Large ribosomal subunit protein uL6 (177 aa).

Belongs to the universal ribosomal protein uL6 family. In terms of assembly, part of the 50S ribosomal subunit.

Its function is as follows. This protein binds to the 23S rRNA, and is important in its secondary structure. It is located near the subunit interface in the base of the L7/L12 stalk, and near the tRNA binding site of the peptidyltransferase center. This is Large ribosomal subunit protein uL6 from Zymomonas mobilis subsp. mobilis (strain ATCC 31821 / ZM4 / CP4).